A 221-amino-acid chain; its full sequence is NIP3 homolog (221 aa).

Residues 24-55 form a disordered region; it reads GEKTDESVQPQQQTEQSSAQQTTPSAKAVSNP. Lys-26 is covalently cross-linked (Glycyl lysine isopeptide (Lys-Gly) (interchain with G-Cter in ubiquitin)). Over residues 32 to 49 the composition is skewed to low complexity; the sequence is QPQQQTEQSSAQQTTPSA. A helical membrane pass occupies residues 189-209; it reads VVFGFLVTNIFSFVVGAAVGF. Residues 189–209 form a required for initiation of apoptosis region; sequence VVFGFLVTNIFSFVVGAAVGF.

This sequence belongs to the NIP3 family. Homodimer; via transmembrane domain. Interacts with ced-3 and ced-9. In terms of processing, ubiquitinated and degraded by the proteasome. Under oxidative stress conditions, ubiquitinated at Lys-26 in a pink-1 dependent manner. Colocalizes with pdr-1 and may be ubiquitinated by it. In terms of tissue distribution, expressed in all somatic tissues including neurons, pharynx, intestine, body wall muscles and vulva muscles.

It is found in the mitochondrion outer membrane. Initiates apoptosis in a BH3-independent mechanism possibly by recruiting ced-3 to mitochondria and other cytoplasmic membranes. Has a role in lifespan and tumor growth. Required for the induction of mitophagy under stress conditions. This is NIP3 homolog from Caenorhabditis elegans.